We begin with the raw amino-acid sequence, 80 residues long: Probable Rubredoxin-1 (80 aa).

The Rubredoxin-like domain occupies 19 to 72 (YRKYKCKVCGWVYDPLKGDPSQNIPPKTPFEELPDTWICPVCRGKVGKESFEPL). Fe cation is bound by residues C24, C27, C57, and C60.

This sequence belongs to the rubredoxin family. Fe(3+) serves as cofactor.

Its function is as follows. Rubredoxin is a small nonheme, iron protein lacking acid-labile sulfide. Its single Fe, chelated to 4 Cys, functions as an electron acceptor and may also stabilize the conformation of the molecule. The protein is Probable Rubredoxin-1 of Methanocaldococcus jannaschii (strain ATCC 43067 / DSM 2661 / JAL-1 / JCM 10045 / NBRC 100440) (Methanococcus jannaschii).